The primary structure comprises 195 residues: GTP cyclohydrolase 1 (195 aa).

Residues cysteine 86, histidine 89, and cysteine 158 each coordinate Zn(2+).

Belongs to the GTP cyclohydrolase I family. In terms of assembly, homomer.

The catalysed reaction is GTP + H2O = 7,8-dihydroneopterin 3'-triphosphate + formate + H(+). Its pathway is cofactor biosynthesis; 7,8-dihydroneopterin triphosphate biosynthesis; 7,8-dihydroneopterin triphosphate from GTP: step 1/1. The sequence is that of GTP cyclohydrolase 1 from Ruminiclostridium cellulolyticum (strain ATCC 35319 / DSM 5812 / JCM 6584 / H10) (Clostridium cellulolyticum).